Reading from the N-terminus, the 165-residue chain is Growth arrest and DNA damage-inducible protein GADD45 alpha (165 aa).

Position 2 is a phosphothreonine (T2).

Belongs to the GADD45 family. In terms of assembly, interacts with AURKA, PCNA, GADD45GIP1 and MAPK14.

Its subcellular location is the nucleus. Functionally, might affect PCNA interaction with some CDK (cell division protein kinase) complexes; stimulates DNA excision repair in vitro and inhibits entry of cells into S phase. In T-cells, functions as a regulator of p38 MAPKs by inhibiting p88 phosphorylation and activity. In Felis catus (Cat), this protein is Growth arrest and DNA damage-inducible protein GADD45 alpha (GADD45A).